A 328-amino-acid chain; its full sequence is tRNA uridine(34) hydroxylase (328 aa).

Positions 123–217 (SDPETVLIDT…YLEEVPKEKS (95 aa)) constitute a Rhodanese domain. Cys177 acts as the Cysteine persulfide intermediate in catalysis. The interval 304 to 328 (AKKLAQLNKQKKQQAKEAARKKAQQ) is disordered. Basic and acidic residues predominate over residues 317-328 (QAKEAARKKAQQ).

Belongs to the TrhO family.

The catalysed reaction is uridine(34) in tRNA + AH2 + O2 = 5-hydroxyuridine(34) in tRNA + A + H2O. Catalyzes oxygen-dependent 5-hydroxyuridine (ho5U) modification at position 34 in tRNAs. This is tRNA uridine(34) hydroxylase from Francisella tularensis subsp. holarctica (strain LVS).